The chain runs to 990 residues: Bifunctional glutamine synthetase adenylyltransferase/adenylyl-removing enzyme (990 aa).

The segment at 1–474 (MIFSAITADL…HYAKLFEGDP (474 aa)) is adenylyl removase. The segment at 478–990 (AKLPPVDYGA…FSRLIGGEDA (513 aa)) is adenylyl transferase.

This sequence belongs to the GlnE family. The cofactor is Mg(2+).

It catalyses the reaction [glutamine synthetase]-O(4)-(5'-adenylyl)-L-tyrosine + phosphate = [glutamine synthetase]-L-tyrosine + ADP. The catalysed reaction is [glutamine synthetase]-L-tyrosine + ATP = [glutamine synthetase]-O(4)-(5'-adenylyl)-L-tyrosine + diphosphate. Involved in the regulation of glutamine synthetase GlnA, a key enzyme in the process to assimilate ammonia. When cellular nitrogen levels are high, the C-terminal adenylyl transferase (AT) inactivates GlnA by covalent transfer of an adenylyl group from ATP to specific tyrosine residue of GlnA, thus reducing its activity. Conversely, when nitrogen levels are low, the N-terminal adenylyl removase (AR) activates GlnA by removing the adenylyl group by phosphorolysis, increasing its activity. The regulatory region of GlnE binds the signal transduction protein PII (GlnB) which indicates the nitrogen status of the cell. This Rhodopseudomonas palustris (strain ATCC BAA-98 / CGA009) protein is Bifunctional glutamine synthetase adenylyltransferase/adenylyl-removing enzyme.